The following is a 967-amino-acid chain: Leucine--tRNA ligase (967 aa).

Positions 43–53 match the 'HIGH' region motif; it reads PYLSGHLHVGH. The short motif at 650–654 is the 'KMSKS' region element; the sequence is KMSKS. Lysine 653 contributes to the ATP binding site.

This sequence belongs to the class-I aminoacyl-tRNA synthetase family.

It is found in the cytoplasm. It carries out the reaction tRNA(Leu) + L-leucine + ATP = L-leucyl-tRNA(Leu) + AMP + diphosphate. The polypeptide is Leucine--tRNA ligase (Pyrococcus abyssi (strain GE5 / Orsay)).